The chain runs to 156 residues: FAD synthase (156 aa).

ATP-binding positions include 9–10 (TF), 14–17 (HPGH), N92, and H119.

This sequence belongs to the archaeal FAD synthase family. As to quaternary structure, homodimer. A divalent metal cation serves as cofactor.

It carries out the reaction FMN + ATP + H(+) = FAD + diphosphate. It participates in cofactor biosynthesis; FAD biosynthesis; FAD from FMN: step 1/1. Its function is as follows. Catalyzes the transfer of the AMP portion of ATP to flavin mononucleotide (FMN) to produce flavin adenine dinucleotide (FAD) coenzyme. The polypeptide is FAD synthase (Methanospirillum hungatei JF-1 (strain ATCC 27890 / DSM 864 / NBRC 100397 / JF-1)).